The chain runs to 195 residues: SXP/RAL-2-like protein 2 (195 aa).

The tract at residues 162–195 (EKVHGGSHGGLRGGPGGPRDGPRGGPRGGPRGGR) is disordered. A compositionally biased stretch (gly residues) spans 167-195 (GSHGGLRGGPGGPRDGPRGGPRGGPRGGR).

Belongs to the SXP/RAL-2 family.

The protein is SXP/RAL-2-like protein 2 of Caenorhabditis elegans.